A 134-amino-acid chain; its full sequence is Small ribosomal subunit protein uS12 (134 aa).

Asp89 is modified (3-methylthioaspartic acid). The interval 101–134 (TLDASGVNGRNQSRSKYGTKRPKPGQAAAGGKKK) is disordered. Over residues 125–134 (GQAAAGGKKK) the composition is skewed to low complexity.

The protein belongs to the universal ribosomal protein uS12 family. As to quaternary structure, part of the 30S ribosomal subunit. Contacts proteins S8 and S17. May interact with IF1 in the 30S initiation complex.

In terms of biological role, with S4 and S5 plays an important role in translational accuracy. Functionally, interacts with and stabilizes bases of the 16S rRNA that are involved in tRNA selection in the A site and with the mRNA backbone. Located at the interface of the 30S and 50S subunits, it traverses the body of the 30S subunit contacting proteins on the other side and probably holding the rRNA structure together. The combined cluster of proteins S8, S12 and S17 appears to hold together the shoulder and platform of the 30S subunit. The chain is Small ribosomal subunit protein uS12 from Gemmatimonas aurantiaca (strain DSM 14586 / JCM 11422 / NBRC 100505 / T-27).